The following is a 332-amino-acid chain: DNA double-strand break repair nuclease NurA (332 aa).

Residues Asp-57 and Asp-132 each coordinate Mn(2+).

This sequence belongs to the NurA family. The cofactor is Mn(2+).

Involved in DNA double-strand break (DSB) repair. Probably acts with HerA to stimulate resection of the 5' strand and produce the long 3' single-strand that is required for RadA loading. Exhibits both single-stranded endonuclease activity and 5'-3' exonuclease activity on single-stranded and double-stranded DNA. The polypeptide is DNA double-strand break repair nuclease NurA (Sulfolobus acidocaldarius (strain ATCC 33909 / DSM 639 / JCM 8929 / NBRC 15157 / NCIMB 11770)).